The primary structure comprises 473 residues: MSMKLHVKTWGCQMNEYDSSKMADLLNSTNGYISVEHAEDADVVLLNTCSIREKAQEKVFHQLGRWKKLKVNKPNLVIGVGGCVASQEGKAIRSRAPFVDIVFGPQTLHRLPEMIKEVQENKGTVVDVSFPEIEKFDSLPEPKADGATAFVSIMEGCSKYCSFCVVPYTRGEEVSRPLDDVLLEVAQLAEQGVREVTLLGQNVNSYLGATYDGDTCSFAELLRFVASIDGIDRLRYVTSNPIDFSDEIIAVYEDTPELVNFLHLPVQAGSDRILAAMKRGHTVAQYKDQIARLLQVRPELTVSSDFIIGFPNETDHDFEQTMDLIKYINFDTSYSFIYSQRPGTPAADMPDDVTLETKKQRLAILQDRIQQQSQGIGRKMVGSVQRILVEGPSRKNIMELCGRTENNRIVNFEGDHRSIGGFVDVEITEVHTNSIRGKFIRGEAEMNLRESIRPSDIVNKHENKSAVNSYIPA.

The MTTase N-terminal domain occupies 3 to 120 (MKLHVKTWGC…LPEMIKEVQE (118 aa)). Positions 12, 49, 83, 157, 161, and 164 each coordinate [4Fe-4S] cluster. Residues 143–375 (KADGATAFVS…QDRIQQQSQG (233 aa)) enclose the Radical SAM core domain. The TRAM domain maps to 378–441 (RKMVGSVQRI…TNSIRGKFIR (64 aa)).

Belongs to the methylthiotransferase family. MiaB subfamily. As to quaternary structure, monomer. Requires [4Fe-4S] cluster as cofactor.

The protein localises to the cytoplasm. It carries out the reaction N(6)-dimethylallyladenosine(37) in tRNA + (sulfur carrier)-SH + AH2 + 2 S-adenosyl-L-methionine = 2-methylsulfanyl-N(6)-dimethylallyladenosine(37) in tRNA + (sulfur carrier)-H + 5'-deoxyadenosine + L-methionine + A + S-adenosyl-L-homocysteine + 2 H(+). Catalyzes the methylthiolation of N6-(dimethylallyl)adenosine (i(6)A), leading to the formation of 2-methylthio-N6-(dimethylallyl)adenosine (ms(2)i(6)A) at position 37 in tRNAs that read codons beginning with uridine. This is tRNA-2-methylthio-N(6)-dimethylallyladenosine synthase from Psychromonas ingrahamii (strain DSM 17664 / CCUG 51855 / 37).